The following is a 291-amino-acid chain: Farnesyl diphosphate synthase (291 aa).

Residues lysine 44, arginine 47, and histidine 76 each contribute to the isopentenyl diphosphate site. 2 residues coordinate Mg(2+): aspartate 83 and aspartate 89. Arginine 94 is a (2E)-geranyl diphosphate binding site. Arginine 95 is a binding site for isopentenyl diphosphate. 4 residues coordinate (2E)-geranyl diphosphate: lysine 177, threonine 178, glutamine 215, and lysine 232.

This sequence belongs to the FPP/GGPP synthase family. Mg(2+) is required as a cofactor.

The protein resides in the cytoplasm. It catalyses the reaction isopentenyl diphosphate + (2E)-geranyl diphosphate = (2E,6E)-farnesyl diphosphate + diphosphate. This Micrococcus luteus (Micrococcus lysodeikticus) protein is Farnesyl diphosphate synthase (fps).